Reading from the N-terminus, the 175-residue chain is uncharacterized protein (175 aa).

Disordered regions lie at residues Met-1–His-32 and Lys-156–Gln-175. Low complexity predominate over residues Leu-14–Lys-24.

This is an uncharacterized protein from Mycoplasma pneumoniae (strain ATCC 29342 / M129 / Subtype 1) (Mycoplasmoides pneumoniae).